Here is a 135-residue protein sequence, read N- to C-terminus: Dihydromethanopterin reductase (135 aa).

NADP(+) is bound by residues Ala-9, 16-21 (LGLNGH), 52-54 (PKT), and 93-97 (GGIAV).

Homodimer.

It catalyses the reaction 5,6,7,8-tetrahydromethanopterin + NAD(+) = 7,8-dihydromethanopterin + NADH + H(+). The catalysed reaction is 5,6,7,8-tetrahydromethanopterin + NADP(+) = 7,8-dihydromethanopterin + NADPH + H(+). The protein operates within cofactor biosynthesis; 5,6,7,8-tetrahydromethanopterin biosynthesis. In terms of biological role, catalyzes the reduction of dihydromethanopterin (H(2)MPT) to tetrahydromethanopterin (H(4)MPT). Shows preference for NADPH rather than NADH as electron donor. Does not reduce dihydrofolate. The polypeptide is Dihydromethanopterin reductase (dmrA) (Methylorubrum extorquens (strain ATCC 14718 / DSM 1338 / JCM 2805 / NCIMB 9133 / AM1) (Methylobacterium extorquens)).